The following is a 397-amino-acid chain: Phosphoglycerate kinase (397 aa).

Residues 19 to 21 (DFN), R35, 58 to 61 (HLGR), R117, and R150 each bind substrate. ATP is bound by residues K201, E323, and 349–352 (GGDS).

This sequence belongs to the phosphoglycerate kinase family. As to quaternary structure, monomer.

It localises to the cytoplasm. It catalyses the reaction (2R)-3-phosphoglycerate + ATP = (2R)-3-phospho-glyceroyl phosphate + ADP. The protein operates within carbohydrate degradation; glycolysis; pyruvate from D-glyceraldehyde 3-phosphate: step 2/5. This is Phosphoglycerate kinase from Syntrophobacter fumaroxidans (strain DSM 10017 / MPOB).